The primary structure comprises 145 residues: D-aminoacyl-tRNA deacylase (145 aa).

The Gly-cisPro motif, important for rejection of L-amino acids motif lies at 137–138 (GP).

Belongs to the DTD family. Homodimer.

The protein localises to the cytoplasm. It catalyses the reaction glycyl-tRNA(Ala) + H2O = tRNA(Ala) + glycine + H(+). The catalysed reaction is a D-aminoacyl-tRNA + H2O = a tRNA + a D-alpha-amino acid + H(+). Functionally, an aminoacyl-tRNA editing enzyme that deacylates mischarged D-aminoacyl-tRNAs. Also deacylates mischarged glycyl-tRNA(Ala), protecting cells against glycine mischarging by AlaRS. Acts via tRNA-based rather than protein-based catalysis; rejects L-amino acids rather than detecting D-amino acids in the active site. By recycling D-aminoacyl-tRNA to D-amino acids and free tRNA molecules, this enzyme counteracts the toxicity associated with the formation of D-aminoacyl-tRNA entities in vivo and helps enforce protein L-homochirality. This is D-aminoacyl-tRNA deacylase from Francisella tularensis subsp. novicida (strain U112).